The chain runs to 461 residues: Argininosuccinate lyase (461 aa).

The protein belongs to the lyase 1 family. Argininosuccinate lyase subfamily.

Its subcellular location is the cytoplasm. It carries out the reaction 2-(N(omega)-L-arginino)succinate = fumarate + L-arginine. It functions in the pathway amino-acid biosynthesis; L-arginine biosynthesis; L-arginine from L-ornithine and carbamoyl phosphate: step 3/3. The protein is Argininosuccinate lyase of Streptococcus thermophilus (strain CNRZ 1066).